We begin with the raw amino-acid sequence, 743 residues long: Dolichyl-phosphooligosaccharide-protein glycotransferase 2 (743 aa).

Over 1 to 7 the chain is Cytoplasmic; sequence MKIDKRL. A helical transmembrane segment spans residues 8–28; the sequence is MVIVAIATLFRMIPFRLKYLV. Positions 29–31 match the DXD motif 1 motif; sequence GSD. Residues 29–91 lie on the Extracellular side of the membrane; sequence GSDPYFHLAY…FSFLGISLYT (63 aa). Aspartate 31 is a binding site for Mn(2+). Residues 92 to 112 form a helical membrane-spanning segment; the sequence is AFRVTPVIFGVLTVVFFYLSL. The Cytoplasmic segment spans residues 113-119; it reads KKLYNRD. Residues 120-140 form a helical membrane-spanning segment; the sequence is VAFIVGLFLGVNYGHIFRSMA. Residues 141–144 lie on the Extracellular side of the membrane; sequence NYYR. Mn(2+) is bound by residues arginine 144 and aspartate 146. A DXD motif 2 motif is present at residues 144–146; sequence RGD. Residues 145–165 form a helical membrane-spanning segment; that stretch reads GDNYMLFWYSVALLGIALGLK. Topologically, residues 166–170 are cytoplasmic; sequence TRSKY. A run of 2 helical transmembrane segments spans residues 171–191 and 192–212; these read RYLFYLLPGIATGFASAFWQA and YYPIFVFVLAGGLLLGVYAYL. Residues 213–216 lie on the Cytoplasmic side of the membrane; it reads KSPK. The chain crosses the membrane as a helical span at residues 217–237; sequence LFLDSILIVLSTGLGVLIANI. The Extracellular segment spans residues 238-272; it reads LGDKVGYGMLGYTDWMGKKVAETFGLEFGFIKDAY. The chain crosses the membrane as a helical span at residues 273 to 293; sequence LLIHVKYLLPLSLVFLGFLII. At 294 to 302 the chain is on the cytoplasmic side; the sequence is TKKLNPKIK. Residues 303-323 traverse the membrane as a helical segment; the sequence is VGVLVGGSILAFIVMLVKFPA. Over 324–345 the chain is Extracellular; the sequence is LKDLSTGFGTFREVPISETLPP. Residues 333–336 carry the TIXE motif motif; it reads TFRE. A helical membrane pass occupies residues 346–366; sequence TLDDLWRAYNIAIFLAALYIL. Residues 367 to 373 are Cytoplasmic-facing; sequence RLRKIRS. Residues 374–391 traverse the membrane as a helical segment; that stretch reads GDAILLGYVITSLWMLRY. Topologically, residues 392 to 394 are extracellular; sequence WTR. Residue arginine 394 coordinates a glycophospholipid. A helical transmembrane segment spans residues 395–415; the sequence is FLFTAAPAVAFLSGIGVYELT. The Cytoplasmic segment spans residues 416 to 424; it reads RRIKENKIR. A helical transmembrane segment spans residues 425-445; it reads ITSLGVVILLSSAFSLGEVYS. Residues 446–743 lie on the Extracellular side of the membrane; it reads VKPFMNENWE…LDRGIVRVKN (298 aa). Residues 474 to 476 form an interacts with target acceptor peptide in protein substrate region; sequence WWD. The WWDYG motif motif lies at 474-478; it reads WWDWG. A DK motif motif is present at residues 526–533; sequence DILKFEAI.

The protein belongs to the STT3 family. The cofactor is Mn(2+). Mg(2+) serves as cofactor.

The protein resides in the cell membrane. It catalyses the reaction an archaeal dolichyl phosphooligosaccharide + [protein]-L-asparagine = an archaeal dolichyl phosphate + a glycoprotein with the oligosaccharide chain attached by N-beta-D-glycosyl linkage to a protein L-asparagine.. Its pathway is protein modification; protein glycosylation. Its function is as follows. Oligosaccharyl transferase (OST) that catalyzes the initial transfer of a defined glycan (ManNAcXyl(2)GlcAMan(2)GalNAc in P.furiosus) from the lipid carrier dolichol-monophosphate to an asparagine residue within an Asn-X-Ser/Thr consensus motif in nascent polypeptide chains, the first step in protein N-glycosylation. The sequence is that of Dolichyl-phosphooligosaccharide-protein glycotransferase 2 (aglB2) from Pyrococcus furiosus (strain ATCC 43587 / DSM 3638 / JCM 8422 / Vc1).